The chain runs to 293 residues: Ribonuclease P/MRP protein subunit RPP1 (293 aa).

It belongs to the eukaryotic/archaeal RNase P protein component 3 family. As to quaternary structure, component of nuclear RNase P and RNase MRP complexes. RNase P consists of an RNA moiety and at least 9 protein subunits including POP1, POP3, POP4, POP5, POP6, POP7, POP8, RPP1 and RPR2. RNase MRP complex consists of an RNA moiety and at least 10 protein subunits including POP1, POP3, POP4, POP5, POP6, POP7, POP8, RMP1, RPP1 and SNM1, many of which are shared with the RNase P complex.

The protein localises to the nucleus. The catalysed reaction is Endonucleolytic cleavage of RNA, removing 5'-extranucleotides from tRNA precursor.. Component of ribonuclease P, a protein complex that generates mature tRNA molecules by cleaving their 5'-ends. Also a component of RNase MRP, which cleaves pre-rRNA sequences. This chain is Ribonuclease P/MRP protein subunit RPP1 (RPP1), found in Saccharomyces cerevisiae (strain ATCC 204508 / S288c) (Baker's yeast).